The chain runs to 72 residues: MTKEEAIEVDGVVKEALPNTTFRVQLQNGHEILAYLSGRMRKHYIRIVPGDSVKVALSPYDLSRGRIMFRER.

In terms of domain architecture, S1-like spans 1–72 (MTKEEAIEVD…SRGRIMFRER (72 aa)).

This sequence belongs to the IF-1 family. As to quaternary structure, component of the 30S ribosomal translation pre-initiation complex which assembles on the 30S ribosome in the order IF-2 and IF-3, IF-1 and N-formylmethionyl-tRNA(fMet); mRNA recruitment can occur at any time during PIC assembly.

Its subcellular location is the cytoplasm. In terms of biological role, one of the essential components for the initiation of protein synthesis. Stabilizes the binding of IF-2 and IF-3 on the 30S subunit to which N-formylmethionyl-tRNA(fMet) subsequently binds. Helps modulate mRNA selection, yielding the 30S pre-initiation complex (PIC). Upon addition of the 50S ribosomal subunit IF-1, IF-2 and IF-3 are released leaving the mature 70S translation initiation complex. In Treponema pallidum (strain Nichols), this protein is Translation initiation factor IF-1.